Here is a 109-residue protein sequence, read N- to C-terminus: Ig kappa chain V region 3374 (109 aa).

The segment at 1 to 24 (ADIVMTQTPASVSAAVGGTVTINC) is framework-1. Residues 25 to 35 (QASQNIDSWLA) are complementarity-determining-1. The segment at 36-50 (WYQQKPGQPPKVLIY) is framework-2. Residues 51-57 (RTSTLAS) are complementarity-determining-2. Residues 58–89 (GVPSRFKGSRSGTEFTLTISDLECADAATYYC) form a framework-3 region. The segment at 90-98 (QSYYSISSA) is complementarity-determining-3. The framework-4 stretch occupies residues 99 to 108 (FGGGTEVVVK).

This chain is Ig kappa chain V region 3374, found in Oryctolagus cuniculus (Rabbit).